Consider the following 1045-residue polypeptide: Extracellular serine protease (1045 aa).

A signal peptide spans 1–27 (MILNKRLKLAYCVFLGCYGLSIHSSLA). The region spanning 49–397 (QWGLEAISAE…WGRVNLRDAI (349 aa)) is the Peptidase S8 domain. Catalysis depends on charge relay system residues aspartate 76, histidine 112, and serine 341. Positions 646–1045 (SLASTENEKA…SVNAGLTWRF (400 aa)) are cleaved as a propeptide — translocator domain; removed in mature form. Residues 769 to 1045 (IKADDNGAWA…SVNAGLTWRF (277 aa)) enclose the Autotransporter domain.

This sequence belongs to the peptidase S8 family.

Its subcellular location is the secreted. This is Extracellular serine protease from Serratia marcescens.